The chain runs to 415 residues: D-serine dehydratase (415 aa).

Lys-68 is subject to N6-(pyridoxal phosphate)lysine. Pyridoxal 5'-phosphate contacts are provided by Tyr-204, Tyr-211, Thr-253, Gly-279, and Asn-280. Residues His-385 and Cys-387 each contribute to the Zn(2+) site.

Belongs to the DSD1 family. As to quaternary structure, homodimer. It depends on pyridoxal 5'-phosphate as a cofactor. The cofactor is Zn(2+).

The protein localises to the cytoplasm. Its subcellular location is the nucleus. It carries out the reaction D-serine = pyruvate + NH4(+). In terms of biological role, catalyzes the conversion of D-serine to pyruvate and ammonia. May play a role in D-serine detoxification. This Schizosaccharomyces pombe (strain 972 / ATCC 24843) (Fission yeast) protein is D-serine dehydratase.